The following is a 294-amino-acid chain: Acetyl-coenzyme A carboxylase carboxyl transferase subunit beta (294 aa).

A CoA carboxyltransferase N-terminal domain is found at 29–294 (LWEKCPECGQ…TQEVKLQTNA (266 aa)). The Zn(2+) site is built by Cys33, Cys36, Cys52, and Cys55. A C4-type zinc finger spans residues 33–55 (CPECGQVVYRKDLIDNCSVCSNC).

Belongs to the AccD/PCCB family. In terms of assembly, acetyl-CoA carboxylase is a heterohexamer composed of biotin carboxyl carrier protein (AccB), biotin carboxylase (AccC) and two subunits each of ACCase subunit alpha (AccA) and ACCase subunit beta (AccD). The cofactor is Zn(2+).

Its subcellular location is the cytoplasm. The catalysed reaction is N(6)-carboxybiotinyl-L-lysyl-[protein] + acetyl-CoA = N(6)-biotinyl-L-lysyl-[protein] + malonyl-CoA. It participates in lipid metabolism; malonyl-CoA biosynthesis; malonyl-CoA from acetyl-CoA: step 1/1. Its function is as follows. Component of the acetyl coenzyme A carboxylase (ACC) complex. Biotin carboxylase (BC) catalyzes the carboxylation of biotin on its carrier protein (BCCP) and then the CO(2) group is transferred by the transcarboxylase to acetyl-CoA to form malonyl-CoA. This is Acetyl-coenzyme A carboxylase carboxyl transferase subunit beta from Prochlorococcus marinus (strain NATL1A).